Reading from the N-terminus, the 332-residue chain is 5,10-methylenetetrahydromethanopterin reductase (332 aa).

The protein belongs to the mer family.

The protein resides in the cytoplasm. It carries out the reaction 5-methyl-5,6,7,8-tetrahydromethanopterin + oxidized coenzyme F420-(gamma-L-Glu)(n) + H(+) = 5,10-methylenetetrahydromethanopterin + reduced coenzyme F420-(gamma-L-Glu)(n). It participates in metabolic intermediate metabolism; lactate oxidation. In terms of biological role, catalyzes the oxidation of methyl-H(4)MPT to methylene-H(4)MPT. The polypeptide is 5,10-methylenetetrahydromethanopterin reductase (Archaeoglobus fulgidus (strain ATCC 49558 / DSM 4304 / JCM 9628 / NBRC 100126 / VC-16)).